The primary structure comprises 283 residues: Homeobox-leucine zipper protein HAT2 (283 aa).

Residues 64-134 are disordered; sequence VNCEEDTGVS…GETSRKKLRL (71 aa). The span at 73–84 shows a compositional bias: low complexity; the sequence is SSPNSTISSTIS. The homeobox DNA-binding region spans 127 to 186; that stretch reads TSRKKLRLSKDQSAFLEETFKEHNTLNPKQKLALAKKLNLTARQVEVWFQNRRARTKLKQ. The segment at 194 to 215 is leucine-zipper; the sequence is LKRCVEKLTEENRRLQKEAMEL.

This sequence belongs to the HD-ZIP homeobox family. Class II subfamily. As to quaternary structure, interacts with RBR1.

It is found in the nucleus. Probable transcription factor that plays a role in auxin-mediated morphogenesis. Negatively regulates lateral root elongation. The sequence is that of Homeobox-leucine zipper protein HAT2 (HAT2) from Arabidopsis thaliana (Mouse-ear cress).